The sequence spans 534 residues: Glycerophosphodiester transporter GIT2 (534 aa).

Transmembrane regions (helical) follow at residues 63-83, 96-116, 135-155, 163-183, 202-222, 230-250, 289-309, 322-342, 350-370, 377-397, 417-437, and 453-473; these read GAGLFADGYVNNSIGIVMACL, AISNIGSIGFVGTVVGQLSFG, LIAFTLLCAVGSWGTTIQGFF, FCLGVAIGAEYPTSSVIASEF, FMIDFGFVVSAFVPFVLLWIF, LWRVSIGLGAILPTALFFIRL, MIWFIYNFSVYSFGTFNAIIL, WGWSVVFNLFYIPGSFLGAFS, LTLAIGVGLQGIIGFIMSACL, VAAFTVVFGIFATLGEFGPGG, GIAAAMGKIGAFVGTWIFPAI, and VPFYLSSGLCIFSALLTFFLC.

This sequence belongs to the major facilitator superfamily. Sugar transporter (TC 2.A.1.1) family.

It localises to the cell membrane. Its function is as follows. Probable glycerophosphodiester transporter. Does not possess detectable glycerophosphoinositol (GroPIns) transport activity. Might be involved in the uptake of glycerophosphocholine (GroPCho). The expanded ability to utilize GroPIns and GroPCho results from the organism's pathogenic nature and its need to occupy a variety of environments within its host organism. This possibility is buttressed by the fact that GroPIns and GroPCho are present and abundant in human fluids. The protein is Glycerophosphodiester transporter GIT2 of Candida albicans (strain SC5314 / ATCC MYA-2876) (Yeast).